A 179-amino-acid chain; its full sequence is MSRLQDFYKSKVAVDLQAKFGYKSVMEVPRITKITLNMGVSEAVADKKVIEHAVSDLTKIAGQKPVITKTRKAIAGFKIRENYPIGCMVTLRGQRMYEFLDRLVAIALPRVRDFRGISGRAFDGRGNYNIGVKEQIIFPEIEYDKIDALRGLNISITTSAKTDEEAKALLTAFSFPFRN.

This sequence belongs to the universal ribosomal protein uL5 family. As to quaternary structure, part of the 50S ribosomal subunit; part of the 5S rRNA/L5/L18/L25 subcomplex. Contacts the 5S rRNA and the P site tRNA. Forms a bridge to the 30S subunit in the 70S ribosome.

This is one of the proteins that bind and probably mediate the attachment of the 5S RNA into the large ribosomal subunit, where it forms part of the central protuberance. In the 70S ribosome it contacts protein S13 of the 30S subunit (bridge B1b), connecting the 2 subunits; this bridge is implicated in subunit movement. Contacts the P site tRNA; the 5S rRNA and some of its associated proteins might help stabilize positioning of ribosome-bound tRNAs. This is Large ribosomal subunit protein uL5 from Bordetella avium (strain 197N).